A 193-amino-acid chain; its full sequence is Holliday junction branch migration complex subunit RuvA (193 aa).

The tract at residues 1–63 (MYAYLKGKIM…EDAQLLYGFK (63 aa)) is domain I. The interval 64 to 141 (DEEEKAMFNA…TITDESELFK (78 aa)) is domain II. A flexible linker region spans residues 141 to 142 (KE). Positions 143 to 193 (VNDTLLNEALLAFEALGYSKREITKIEKELKKKQFSTVDEYVKQGLQMFVS) are domain III.

This sequence belongs to the RuvA family. In terms of assembly, homotetramer. Forms an RuvA(8)-RuvB(12)-Holliday junction (HJ) complex. HJ DNA is sandwiched between 2 RuvA tetramers; dsDNA enters through RuvA and exits via RuvB. An RuvB hexamer assembles on each DNA strand where it exits the tetramer. Each RuvB hexamer is contacted by two RuvA subunits (via domain III) on 2 adjacent RuvB subunits; this complex drives branch migration. In the full resolvosome a probable DNA-RuvA(4)-RuvB(12)-RuvC(2) complex forms which resolves the HJ.

The protein resides in the cytoplasm. The RuvA-RuvB-RuvC complex processes Holliday junction (HJ) DNA during genetic recombination and DNA repair, while the RuvA-RuvB complex plays an important role in the rescue of blocked DNA replication forks via replication fork reversal (RFR). RuvA specifically binds to HJ cruciform DNA, conferring on it an open structure. The RuvB hexamer acts as an ATP-dependent pump, pulling dsDNA into and through the RuvAB complex. HJ branch migration allows RuvC to scan DNA until it finds its consensus sequence, where it cleaves and resolves the cruciform DNA. The sequence is that of Holliday junction branch migration complex subunit RuvA from Macrococcus caseolyticus (strain JCSC5402) (Macrococcoides caseolyticum).